Reading from the N-terminus, the 254-residue chain is 5-oxoprolinase subunit A (254 aa).

This sequence belongs to the LamB/PxpA family. As to quaternary structure, forms a complex composed of PxpA, PxpB and PxpC.

It catalyses the reaction 5-oxo-L-proline + ATP + 2 H2O = L-glutamate + ADP + phosphate + H(+). Catalyzes the cleavage of 5-oxoproline to form L-glutamate coupled to the hydrolysis of ATP to ADP and inorganic phosphate. The sequence is that of 5-oxoprolinase subunit A from Burkholderia ambifaria (strain MC40-6).